The chain runs to 471 residues: ATP synthase subunit beta (471 aa).

154–161 (GGAGVGKT) contributes to the ATP binding site.

Belongs to the ATPase alpha/beta chains family. In terms of assembly, F-type ATPases have 2 components, CF(1) - the catalytic core - and CF(0) - the membrane proton channel. CF(1) has five subunits: alpha(3), beta(3), gamma(1), delta(1), epsilon(1). CF(0) has three main subunits: a(1), b(2) and c(9-12). The alpha and beta chains form an alternating ring which encloses part of the gamma chain. CF(1) is attached to CF(0) by a central stalk formed by the gamma and epsilon chains, while a peripheral stalk is formed by the delta and b chains.

The protein resides in the cell membrane. It catalyses the reaction ATP + H2O + 4 H(+)(in) = ADP + phosphate + 5 H(+)(out). Functionally, produces ATP from ADP in the presence of a proton gradient across the membrane. The catalytic sites are hosted primarily by the beta subunits. In Mesomycoplasma hyopneumoniae (strain J / ATCC 25934 / NCTC 10110) (Mycoplasma hyopneumoniae), this protein is ATP synthase subunit beta.